Here is a 476-residue protein sequence, read N- to C-terminus: RuvB-like helicase 2 (476 aa).

ATP is bound at residue 72–80; that stretch reads VGPPSTGKT.

It belongs to the RuvB family. In terms of assembly, may form heterododecamers with RVB1. Component of the SWR1 chromatin remodeling complex, the INO80 chromatin remodeling complex, and of the R2TP complex.

The protein localises to the nucleus. The catalysed reaction is ATP + H2O = ADP + phosphate + H(+). Functionally, DNA helicase which participates in several chromatin remodeling complexes, including the SWR1 and the INO80 complexes. The SWR1 complex mediates the ATP-dependent exchange of histone H2A for the H2A variant HZT1 leading to transcriptional regulation of selected genes by chromatin remodeling. The INO80 complex remodels chromatin by shifting nucleosomes and is involved in DNA repair. Also involved in pre-rRNA processing. In Mycosarcoma maydis (Corn smut fungus), this protein is RuvB-like helicase 2 (RVB2).